We begin with the raw amino-acid sequence, 316 residues long: Ribosomal RNA small subunit methyltransferase H (316 aa).

Residues 42-44 (GGH), D62, F86, D104, and Q111 each bind S-adenosyl-L-methionine.

Belongs to the methyltransferase superfamily. RsmH family.

It is found in the cytoplasm. It catalyses the reaction cytidine(1402) in 16S rRNA + S-adenosyl-L-methionine = N(4)-methylcytidine(1402) in 16S rRNA + S-adenosyl-L-homocysteine + H(+). In terms of biological role, specifically methylates the N4 position of cytidine in position 1402 (C1402) of 16S rRNA. The sequence is that of Ribosomal RNA small subunit methyltransferase H from Polynucleobacter asymbioticus (strain DSM 18221 / CIP 109841 / QLW-P1DMWA-1) (Polynucleobacter necessarius subsp. asymbioticus).